The following is a 739-amino-acid chain: Alcohol dehydrogenase (quinone), dehydrogenase subunit (739 aa).

Residues 1–35 (MISAVFGKRRSLSRTLTAGTICAALISGYATMASA) form the signal peptide. Residue E97 participates in pyrroloquinoline quinone binding. An intrachain disulfide couples C143 to C144. Pyrroloquinoline quinone is bound at residue R149. Ca(2+) is bound at residue E217. T279 contributes to the pyrroloquinoline quinone binding site. N299 and D344 together coordinate Ca(2+). The active-site Proton acceptor is D344. The pyrroloquinoline quinone site is built by K371 and I585. The Cytochrome c domain occupies 635–739 (FDSKRTDNGY…NADGIPEQLP (105 aa)). C651, C654, H655, and M694 together coordinate heme c.

Belongs to the bacterial PQQ dehydrogenase family. As to quaternary structure, the alcohol dehydrogenase multicomponent enzyme system is composed of a dehydrogenase subunit I (AdhA) and a cytochrome c subunit II (AdhB). Pyrroloquinoline quinone is required as a cofactor. Ca(2+) serves as cofactor. Requires heme c as cofactor.

It is found in the cell membrane. The enzyme catalyses ethanol + a ubiquinone = a ubiquinol + acetaldehyde. In terms of biological role, dehydrogenase component of the alcohol dehydrogenase multicomponent enzyme system which is involved in the production of acetic acid and in the ethanol oxidase respiratory chain. Quinohemoprotein alcohol dehydrogenase (ADH) catalyzes the oxidation of ethanol to acetaldehyde by transferring electrons to the ubiquinone embedded in the membrane phospholipids. The electrons transfer from ethanol to membranous ubiquinone occurs from pyrroloquinoline quinone (PQQ) to one heme c in subunit I (AdhA), and finally to two heme c in subunit II (AdhB). Besides ubiquinone reduction, ADH also has a ubiquinol (QH2) oxidation reaction which mediates electron transfer from ubiquinol to the non-energy generating bypass oxidase system. The electrons transfer occurs from ubiquinol (QH2) to the additional heme c within subunit II (AdhB). This chain is Alcohol dehydrogenase (quinone), dehydrogenase subunit, found in Komagataeibacter europaeus (Gluconacetobacter europaeus).